The sequence spans 158 residues: Fibroblast growth factor 2 (158 aa).

Positions methionine 1–leucine 12 are excised as a propeptide. Position 39 (asparagine 39) interacts with heparin. The interval lysine 131–lysine 147 is heparin-binding.

Belongs to the heparin-binding growth factors family.

The protein resides in the secreted. Its subcellular location is the nucleus. Its function is as follows. Acts as a ligand for FGFR1, FGFR2, FGFR3 and FGFR4. Also acts as an integrin ligand which is required for FGF2 signaling. Plays an important role in the regulation of cell survival, cell division, cell differentiation and cell migration. Functions as a potent mitogen in vitro. Can induce angiogenesis. The protein is Fibroblast growth factor 2 (FGF2) of Gallus gallus (Chicken).